Reading from the N-terminus, the 149-residue chain is MAEQTFIMIKPDGVQRGLVGEIISRFEKKGFYLKGLKFVNVERAFAEKHYADLSAKPFFSGLVDYIISGPVVAMIWEGKNVVTTGRKIIGATNPAQSEPGTIRGDFAIDIGRNVIHGSDAVESANKEIALWFPEGAANWESSLHSWIYE.

Positions 10, 58, 86, 92, 103, and 113 each coordinate ATP. The Pros-phosphohistidine intermediate role is filled by His116.

It belongs to the NDK family. The cofactor is Mg(2+).

The catalysed reaction is a 2'-deoxyribonucleoside 5'-diphosphate + ATP = a 2'-deoxyribonucleoside 5'-triphosphate + ADP. The enzyme catalyses a ribonucleoside 5'-diphosphate + ATP = a ribonucleoside 5'-triphosphate + ADP. Its function is as follows. Major role in the synthesis of nucleoside triphosphates other than ATP. The ATP gamma phosphate is transferred to the NDP beta phosphate via a ping-pong mechanism, using a phosphorylated active-site intermediate. This NDK is microtubule-associated. This is Nucleoside diphosphate kinase 1 (NDPK1) from Pisum sativum (Garden pea).